A 481-amino-acid chain; its full sequence is 3-isopropylmalate dehydratase large subunit (481 aa).

[4Fe-4S] cluster contacts are provided by Cys-357, Cys-417, and Cys-420.

The protein belongs to the aconitase/IPM isomerase family. LeuC type 1 subfamily. Heterodimer of LeuC and LeuD. It depends on [4Fe-4S] cluster as a cofactor.

It catalyses the reaction (2R,3S)-3-isopropylmalate = (2S)-2-isopropylmalate. Its pathway is amino-acid biosynthesis; L-leucine biosynthesis; L-leucine from 3-methyl-2-oxobutanoate: step 2/4. In terms of biological role, catalyzes the isomerization between 2-isopropylmalate and 3-isopropylmalate, via the formation of 2-isopropylmaleate. The sequence is that of 3-isopropylmalate dehydratase large subunit from Mycolicibacterium gilvum (strain PYR-GCK) (Mycobacterium gilvum (strain PYR-GCK)).